Reading from the N-terminus, the 457-residue chain is Transcription termination factor Rho (457 aa).

The segment at 1–23 (MNTTNKQLTEELNNTESNNDHND) is disordered. The Rho RNA-BD domain occupies 77 to 152 (LIVGEGVLEV…LKVNRVNFED (76 aa)). Residues 200 to 205 (GKGQRA), 212 to 217 (RTGKTV), and Arg-243 contribute to the ATP site.

The protein belongs to the Rho family. As to quaternary structure, homohexamer. The homohexamer assembles into an open ring structure.

Functionally, facilitates transcription termination by a mechanism that involves Rho binding to the nascent RNA, activation of Rho's RNA-dependent ATPase activity, and release of the mRNA from the DNA template. The polypeptide is Transcription termination factor Rho (Rickettsia prowazekii (strain Madrid E)).